We begin with the raw amino-acid sequence, 182 residues long: Adenylate kinase (182 aa).

12–17 is an ATP binding site; it reads GAGKGT. The tract at residues 32–61 is NMP; it reads STGDLLRAEVKAGSELGKEAEAVMNRGELV. AMP is bound by residues Thr33, Arg38, 59–61, 85–88, and Gln92; these read ELV and GFPR. An LID region spans residues 126–132; that stretch reads ARGRADD. Position 127 (Arg127) interacts with ATP. The AMP site is built by Arg129 and Arg140. ATP is bound at residue Gly168.

Belongs to the adenylate kinase family. In terms of assembly, monomer.

It is found in the cytoplasm. The catalysed reaction is AMP + ATP = 2 ADP. Its pathway is purine metabolism; AMP biosynthesis via salvage pathway; AMP from ADP: step 1/1. In terms of biological role, catalyzes the reversible transfer of the terminal phosphate group between ATP and AMP. Plays an important role in cellular energy homeostasis and in adenine nucleotide metabolism. This is Adenylate kinase from Synechococcus sp. (strain RCC307).